We begin with the raw amino-acid sequence, 475 residues long: Ribulose bisphosphate carboxylase large chain (475 aa).

The propeptide occupies 1 to 2; the sequence is MS. Pro-3 carries the N-acetylproline modification. Residue Lys-14 is modified to N6,N6,N6-trimethyllysine. Positions 123 and 173 each coordinate substrate. Catalysis depends on Lys-175, which acts as the Proton acceptor. Position 177 (Lys-177) interacts with substrate. Mg(2+)-binding residues include Lys-201, Asp-203, and Glu-204. Residue Lys-201 is modified to N6-carboxylysine. The Proton acceptor role is filled by His-294. Substrate-binding residues include Arg-295, His-327, and Ser-379.

The protein belongs to the RuBisCO large chain family. Type I subfamily. Heterohexadecamer of 8 large chains and 8 small chains; disulfide-linked. The disulfide link is formed within the large subunit homodimers. It depends on Mg(2+) as a cofactor. The disulfide bond which can form in the large chain dimeric partners within the hexadecamer appears to be associated with oxidative stress and protein turnover.

It localises to the plastid. The protein localises to the chloroplast. It catalyses the reaction 2 (2R)-3-phosphoglycerate + 2 H(+) = D-ribulose 1,5-bisphosphate + CO2 + H2O. The catalysed reaction is D-ribulose 1,5-bisphosphate + O2 = 2-phosphoglycolate + (2R)-3-phosphoglycerate + 2 H(+). Functionally, ruBisCO catalyzes two reactions: the carboxylation of D-ribulose 1,5-bisphosphate, the primary event in carbon dioxide fixation, as well as the oxidative fragmentation of the pentose substrate in the photorespiration process. Both reactions occur simultaneously and in competition at the same active site. This Angiopteris lygodiifolia (Turnip fern) protein is Ribulose bisphosphate carboxylase large chain.